Here is a 431-residue protein sequence, read N- to C-terminus: U-box domain-containing protein 20 (431 aa).

In terms of domain architecture, U-box spans 32-106; that stretch reads TIPSQFQCPI…QGWCGSSLGG (75 aa).

The enzyme catalyses S-ubiquitinyl-[E2 ubiquitin-conjugating enzyme]-L-cysteine + [acceptor protein]-L-lysine = [E2 ubiquitin-conjugating enzyme]-L-cysteine + N(6)-ubiquitinyl-[acceptor protein]-L-lysine.. Its pathway is protein modification; protein ubiquitination. In terms of biological role, functions as an E3 ubiquitin ligase. This Arabidopsis thaliana (Mouse-ear cress) protein is U-box domain-containing protein 20 (PUB20).